We begin with the raw amino-acid sequence, 124 residues long: Large ribosomal subunit protein bL12 (124 aa).

The protein belongs to the bacterial ribosomal protein bL12 family. In terms of assembly, homodimer. Part of the ribosomal stalk of the 50S ribosomal subunit. Forms a multimeric L10(L12)X complex, where L10 forms an elongated spine to which 2 to 4 L12 dimers bind in a sequential fashion. Binds GTP-bound translation factors.

Functionally, forms part of the ribosomal stalk which helps the ribosome interact with GTP-bound translation factors. Is thus essential for accurate translation. In Bacteroides thetaiotaomicron (strain ATCC 29148 / DSM 2079 / JCM 5827 / CCUG 10774 / NCTC 10582 / VPI-5482 / E50), this protein is Large ribosomal subunit protein bL12.